The following is a 245-amino-acid chain: Sugar fermentation stimulation protein homolog (245 aa).

It belongs to the SfsA family.

This is Sugar fermentation stimulation protein homolog from Rhodospirillum rubrum (strain ATCC 11170 / ATH 1.1.1 / DSM 467 / LMG 4362 / NCIMB 8255 / S1).